The sequence spans 309 residues: Homoserine kinase (309 aa).

88-98 (PLARGLGSSAA) contacts ATP.

The protein belongs to the GHMP kinase family. Homoserine kinase subfamily.

It localises to the cytoplasm. The catalysed reaction is L-homoserine + ATP = O-phospho-L-homoserine + ADP + H(+). It functions in the pathway amino-acid biosynthesis; L-threonine biosynthesis; L-threonine from L-aspartate: step 4/5. Catalyzes the ATP-dependent phosphorylation of L-homoserine to L-homoserine phosphate. This Halalkalibacterium halodurans (strain ATCC BAA-125 / DSM 18197 / FERM 7344 / JCM 9153 / C-125) (Bacillus halodurans) protein is Homoserine kinase.